Consider the following 134-residue polypeptide: Profilin-3 (134 aa).

Cysteine 13 and cysteine 118 are oxidised to a cystine. An Involved in PIP2 interaction motif is present at residues 84-100 (AVIRGKKGSGGITIKKT). A Phosphothreonine modification is found at threonine 114.

It belongs to the profilin family. As to quaternary structure, occurs in many kinds of cells as a complex with monomeric actin in a 1:1 ratio. In terms of processing, phosphorylated by MAP kinases.

It is found in the cytoplasm. The protein localises to the cytoskeleton. Binds to actin and affects the structure of the cytoskeleton. At high concentrations, profilin prevents the polymerization of actin, whereas it enhances it at low concentrations. The chain is Profilin-3 from Olea europaea (Common olive).